Reading from the N-terminus, the 390-residue chain is Zinc transporter 7 (390 aa).

Over 1–37 (MLPLSIKDDEYKPPKFNLVRKVSGWIRSIFSDTTSRN) the chain is Cytoplasmic. The helical transmembrane segment at 38 to 58 (LFCFLCLNLSFAFVELFYGIW) threads the bilayer. The Lumenal segment spans residues 59 to 67 (SNSLGLISD). A helical membrane pass occupies residues 68–88 (SFHMFFDCTALLAGLAASVIS). The Cytoplasmic segment spans residues 89 to 102 (RWKTNEAFSYGYVR). A helical membrane pass occupies residues 103 to 123 (AEVLAGFVNGLFLIFTAFFIF). The Lumenal segment spans residues 124–140 (SEGIERALDTPEVHHER). Residues 141 to 161 (LLPVSILGFLVNLIGIFVFQH) traverse the membrane as a helical segment. The interval 161 to 226 (HGGGHGHSHE…SHDQSHKHGH (66 aa)) is his-rich loop. At 162 to 250 (GGGHGHSHES…TGSSKQILEG (89 aa)) the chain is on the cytoplasmic side. Residues 167-243 (HSHESGHGHS…DEPPEEHTGS (77 aa)) are disordered. Residues 177-186 (HSLFNGSLSH) show a composition bias toward low complexity. Over residues 187-208 (GHSHSHGGSHGHSHGGGHGHSH) the composition is skewed to basic residues. Composition is skewed to basic and acidic residues over residues 209 to 222 (SHGEGHGHSHDQSH) and 232 to 242 (CHDEPPEEHTG). Residues 251-271 (VFLHIVADALGSVGVIISTIL) form a helical membrane-spanning segment. The Lumenal portion of the chain corresponds to 272–276 (MQRYG). Residues 277–297 (LMIADPICSMLIALLIFVSVI) form a helical membrane-spanning segment. Residues 298–390 (PLLKQSIGIL…LYVQIDMAAM (93 aa)) lie on the Cytoplasmic side of the membrane.

Belongs to the cation diffusion facilitator (CDF) transporter (TC 2.A.4) family. SLC30A subfamily. As to quaternary structure, homooligomer.

It localises to the golgi apparatus membrane. The protein resides in the cytoplasmic vesicle. The protein localises to the golgi apparatus. It is found in the trans-Golgi network. Its subcellular location is the sarcoplasmic reticulum. It localises to the mitochondrion. It carries out the reaction Zn(2+)(in) = Zn(2+)(out). Functionally, zinc ion transporter mediating zinc entry from the cytosol into the lumen of organelles along the secretory pathway. By contributing to zinc ion homeostasis within the early secretory pathway, regulates the activation and folding of enzymes like alkaline phosphatases. This is Zinc transporter 7 (slc30a7) from Xenopus tropicalis (Western clawed frog).